Here is a 221-residue protein sequence, read N- to C-terminus: uncharacterized protein (221 aa).

Low complexity-rich tracts occupy residues 1–27 (MNNN…NNNN) and 140–162 (TTTS…NSSS). Disordered stretches follow at residues 1–28 (MNNN…NNNE) and 140–205 (TTTS…NIGG).

This is an uncharacterized protein from Dictyostelium discoideum (Social amoeba).